Here is a 281-residue protein sequence, read N- to C-terminus: Putative E3 ubiquitin-protein ligase SINA-like 6 (281 aa).

Positions Met1 to Arg26 are disordered. The segment at Cys45–Ala81 adopts an RING-type zinc-finger fold. The segment at Val95–Gln280 is SBD. An SIAH-type zinc finger spans residues Ser98–Ser156. Zn(2+) contacts are provided by Cys103, Cys110, His122, Cys126, Cys133, Cys138, His150, and His155.

The protein belongs to the SINA (Seven in absentia) family.

The enzyme catalyses S-ubiquitinyl-[E2 ubiquitin-conjugating enzyme]-L-cysteine + [acceptor protein]-L-lysine = [E2 ubiquitin-conjugating enzyme]-L-cysteine + N(6)-ubiquitinyl-[acceptor protein]-L-lysine.. The protein operates within protein modification; protein ubiquitination. E3 ubiquitin-protein ligase that mediates ubiquitination and subsequent proteasomal degradation of target proteins. E3 ubiquitin ligases accept ubiquitin from an E2 ubiquitin-conjugating enzyme in the form of a thioester and then directly transfers the ubiquitin to targeted substrates. It probably triggers the ubiquitin-mediated degradation of different substrates. In Arabidopsis thaliana (Mouse-ear cress), this protein is Putative E3 ubiquitin-protein ligase SINA-like 6.